The primary structure comprises 200 residues: Transcription factor FapR (200 aa).

The protein belongs to the FapR family.

Functionally, transcriptional factor involved in regulation of membrane lipid biosynthesis by repressing genes involved in fatty acid and phospholipid metabolism. The chain is Transcription factor FapR from Caldanaerobacter subterraneus subsp. tengcongensis (strain DSM 15242 / JCM 11007 / NBRC 100824 / MB4) (Thermoanaerobacter tengcongensis).